We begin with the raw amino-acid sequence, 357 residues long: Alanine racemase (357 aa).

Residue Lys35 is the Proton acceptor; specific for D-alanine of the active site. N6-(pyridoxal phosphate)lysine is present on Lys35. Arg131 provides a ligand contact to substrate. The Proton acceptor; specific for L-alanine role is filled by Tyr256. Met304 provides a ligand contact to substrate.

It belongs to the alanine racemase family. Pyridoxal 5'-phosphate serves as cofactor.

It carries out the reaction L-alanine = D-alanine. The protein operates within amino-acid biosynthesis; D-alanine biosynthesis; D-alanine from L-alanine: step 1/1. Its function is as follows. Catalyzes the interconversion of L-alanine and D-alanine. May also act on other amino acids. The polypeptide is Alanine racemase (alr) (Legionella pneumophila (strain Corby)).